The sequence spans 267 residues: Tryptophan synthase alpha chain (267 aa).

Catalysis depends on proton acceptor residues Glu-39 and Asp-50.

It belongs to the TrpA family. Tetramer of two alpha and two beta chains.

It carries out the reaction (1S,2R)-1-C-(indol-3-yl)glycerol 3-phosphate + L-serine = D-glyceraldehyde 3-phosphate + L-tryptophan + H2O. It participates in amino-acid biosynthesis; L-tryptophan biosynthesis; L-tryptophan from chorismate: step 5/5. Its function is as follows. The alpha subunit is responsible for the aldol cleavage of indoleglycerol phosphate to indole and glyceraldehyde 3-phosphate. This chain is Tryptophan synthase alpha chain, found in Helicobacter hepaticus (strain ATCC 51449 / 3B1).